A 466-amino-acid chain; its full sequence is MAEEQDLSEVELSPVGSEEPRCLSPGSAPSLGPDGGGGGSGLRASPGPGELGKVKKEQQDGEADDDKFPVCIREAVSQVLSGYDWTLVPMPVRVNGASKSKPHVKRPMNAFMVWAQAARRKLADQYPHLHNAELSKTLGKLWRLLNESDKRPFIEEAERLRMQHKKDHPDYKYQPRRRKNGKAAQGEAECPGGEAEQGGAAAIQAHYKSAHLDHRHPEEGSPMSDGNPEHPSGQSHGPPTPPTTPKTELQSGKADPKRDGRSLGEGGKPHIDFGNVDIGEISHEVMSNMETFDVTELDQYLPPNGHPGHVGSYSAAGYGLGSALAVASGHSAWISKPPGVALPTVSPPGVDAKAQVKTETTGPQGPPHYTDQPSTSQIAYTSLSLPHYGSAFPSISRPQFDYSDHQPSGPYYGHAGQASGLYSAFSYMGPSQRPLYTAISDPSPSGPQSHSPTHWEQPVYTTLSRP.

Disordered regions lie at residues 1–67, 160–200, 213–275, 344–375, and 433–466; these read MAEE…DDDK, LRMQ…QGGA, DHRH…DFGN, TVSP…QPST, and RPLY…LSRP. The span at 23–32 shows a compositional bias: low complexity; sequence LSPGSAPSLG. Ser-24 carries the post-translational modification Phosphoserine. The dimerization (DIM) stretch occupies residues 62-102; that stretch reads EADDDKFPVCIREAVSQVLSGYDWTLVPMPVRVNGASKSKP. The HMG box DNA-binding region spans 104–172; sequence VKRPMNAFMV…QHKKDHPDYK (69 aa). Over residues 160-173 the composition is skewed to basic and acidic residues; sequence LRMQHKKDHPDYKY. Residues 183–200 show a composition bias toward low complexity; it reads AAQGEAECPGGEAEQGGA. Residues 228-310 are transactivation domain (TAM); sequence PEHPSGQSHG…LPPNGHPGHV (83 aa). The segment covering 254–271 has biased composition (basic and acidic residues); the sequence is ADPKRDGRSLGEGGKPHI. The tract at residues 353-466 is transactivation domain (TAC); the sequence is KAQVKTETTG…QPVYTTLSRP (114 aa). Positions 440-466 are enriched in polar residues; it reads SDPSPSGPQSHSPTHWEQPVYTTLSRP.

Monomer. Interacts with Armcx3 at the mitochondrial outer membrane surface. Interacts with PAX3. Expressed in oligodendroglia of the spinal tube (at protein level).

The protein localises to the cytoplasm. Its subcellular location is the nucleus. It is found in the mitochondrion outer membrane. Transcription factor that plays a central role in developing and mature glia. Specifically activates expression of myelin genes, during oligodendrocyte (OL) maturation, such as DUSP15 and MYRF, thereby playing a central role in oligodendrocyte maturation and CNS myelination. Once induced, MYRF cooperates with SOX10 to implement the myelination program. Transcriptional activator of MITF, acting synergistically with PAX3. Transcriptional activator of MBP, via binding to the gene promoter. The sequence is that of Transcription factor SOX-10 (Sox10) from Mus musculus (Mouse).